The chain runs to 191 residues: MAERDNNRRGNRRDRDEAPEFADRLVAINRVSKTVKGGKRFGFAALVVVGDQKGRVGFGKGKAKEVPEAIRKATEQAKRQMIRVQLREGRTLHHDMEGRHGAGKVVMRSAPEGTGIIAGGPMRAVFEMLGVKDVVSKSIGSQNPYNMIRATMDGLRKESSPRSVAQRRGKKVADILPKVDAAPAPAETAEA.

The S5 DRBM domain occupies 21 to 84 (FADRLVAINR…EQAKRQMIRV (64 aa)). The segment at 155–191 (LRKESSPRSVAQRRGKKVADILPKVDAAPAPAETAEA) is disordered. A compositionally biased stretch (low complexity) spans 181–191 (AAPAPAETAEA).

It belongs to the universal ribosomal protein uS5 family. As to quaternary structure, part of the 30S ribosomal subunit. Contacts proteins S4 and S8.

Its function is as follows. With S4 and S12 plays an important role in translational accuracy. Located at the back of the 30S subunit body where it stabilizes the conformation of the head with respect to the body. The protein is Small ribosomal subunit protein uS5 of Roseobacter denitrificans (strain ATCC 33942 / OCh 114) (Erythrobacter sp. (strain OCh 114)).